Reading from the N-terminus, the 549-residue chain is Glucose-6-phosphate isomerase (549 aa).

An N6-acetyllysine mark is found at K80, K228, and K234. E355 acts as the Proton donor in catalysis. Residues H386 and K514 contribute to the active site.

The protein belongs to the GPI family.

The protein resides in the cytoplasm. The enzyme catalyses alpha-D-glucose 6-phosphate = beta-D-fructose 6-phosphate. It participates in carbohydrate biosynthesis; gluconeogenesis. Its pathway is carbohydrate degradation; glycolysis; D-glyceraldehyde 3-phosphate and glycerone phosphate from D-glucose: step 2/4. Its function is as follows. Catalyzes the reversible isomerization of glucose-6-phosphate to fructose-6-phosphate. This Escherichia coli O127:H6 (strain E2348/69 / EPEC) protein is Glucose-6-phosphate isomerase.